We begin with the raw amino-acid sequence, 318 residues long: Ribosomal RNA small subunit methyltransferase H (318 aa).

Residues 33 to 35 (GGH), aspartate 53, phenylalanine 80, aspartate 101, and glutamine 108 each bind S-adenosyl-L-methionine.

It belongs to the methyltransferase superfamily. RsmH family.

It localises to the cytoplasm. It carries out the reaction cytidine(1402) in 16S rRNA + S-adenosyl-L-methionine = N(4)-methylcytidine(1402) in 16S rRNA + S-adenosyl-L-homocysteine + H(+). Its function is as follows. Specifically methylates the N4 position of cytidine in position 1402 (C1402) of 16S rRNA. The polypeptide is Ribosomal RNA small subunit methyltransferase H (Symbiobacterium thermophilum (strain DSM 24528 / JCM 14929 / IAM 14863 / T)).